Here is a 709-residue protein sequence, read N- to C-terminus: Meiotic sister-chromatid recombination protein 6, mitochondrial (709 aa).

Residues 1-29 (MLRINQRLLVRSLRDAQYQYLKSTALRFL) constitute a mitochondrion transit peptide.

It is found in the mitochondrion. May be involved in the control of meiotic sister-chromatid recombination. This is Meiotic sister-chromatid recombination protein 6, mitochondrial (MSC6) from Candida glabrata (strain ATCC 2001 / BCRC 20586 / JCM 3761 / NBRC 0622 / NRRL Y-65 / CBS 138) (Yeast).